The primary structure comprises 862 residues: DNA gyrase subunit A (862 aa).

Positions 38–501 (LPDARDGLKP…DYDDIDVEDL (464 aa)) constitute a Topo IIA-type catalytic domain. Catalysis depends on tyrosine 126, which acts as the O-(5'-phospho-DNA)-tyrosine intermediate. Residues 528–534 (QKRGGKG) carry the GyrA-box motif. A disordered region spans residues 843–862 (KEESDDDDIVADDTQEQDME). The segment covering 845–862 (ESDDDDIVADDTQEQDME) has biased composition (acidic residues).

It belongs to the type II topoisomerase GyrA/ParC subunit family. In terms of assembly, heterotetramer, composed of two GyrA and two GyrB chains. In the heterotetramer, GyrA contains the active site tyrosine that forms a transient covalent intermediate with DNA, while GyrB binds cofactors and catalyzes ATP hydrolysis.

The protein resides in the cytoplasm. It carries out the reaction ATP-dependent breakage, passage and rejoining of double-stranded DNA.. In terms of biological role, a type II topoisomerase that negatively supercoils closed circular double-stranded (ds) DNA in an ATP-dependent manner to modulate DNA topology and maintain chromosomes in an underwound state. Negative supercoiling favors strand separation, and DNA replication, transcription, recombination and repair, all of which involve strand separation. Also able to catalyze the interconversion of other topological isomers of dsDNA rings, including catenanes and knotted rings. Type II topoisomerases break and join 2 DNA strands simultaneously in an ATP-dependent manner. The sequence is that of DNA gyrase subunit A from Campylobacter fetus.